The primary structure comprises 148 residues: NADPH-dependent 7-cyano-7-deazaguanine reductase (148 aa).

C50 (thioimide intermediate) is an active-site residue. D57 (proton donor) is an active-site residue. Residues 72–74 (VES) and 91–92 (HE) contribute to the substrate site.

The protein belongs to the GTP cyclohydrolase I family. QueF type 1 subfamily.

The protein resides in the cytoplasm. It catalyses the reaction 7-aminomethyl-7-carbaguanine + 2 NADP(+) = 7-cyano-7-deazaguanine + 2 NADPH + 3 H(+). It participates in tRNA modification; tRNA-queuosine biosynthesis. Catalyzes the NADPH-dependent reduction of 7-cyano-7-deazaguanine (preQ0) to 7-aminomethyl-7-deazaguanine (preQ1). The sequence is that of NADPH-dependent 7-cyano-7-deazaguanine reductase from Helicobacter pylori (strain J99 / ATCC 700824) (Campylobacter pylori J99).